A 206-amino-acid polypeptide reads, in one-letter code: Transcription elongation factor A protein-like 5 (206 aa).

Residues 1–26 (MEKLYKENEGKPENERNLESEGKPED) show a composition bias toward basic and acidic residues. Residues 1-206 (MEKLYKENEG…QKDLEDVPYV (206 aa)) form a disordered region. Residues 27–42 (EGSTEDEGKSDEEEKP) show a composition bias toward acidic residues. Basic and acidic residues predominate over residues 43-56 (DMEGKTECEGKRED). Residues 57-70 (EGEPGDEGQLEDEG) are compositionally biased toward acidic residues. 4 stretches are compositionally biased toward basic and acidic residues: residues 71 to 86 (NQEK…KPQS), 102 to 113 (AAEKRPAEDYVP), 121 to 160 (DRGT…EELR), and 196 to 206 (GQKDLEDVPYV).

The protein belongs to the TFS-II family. TFA subfamily.

The protein resides in the nucleus. In terms of biological role, may be involved in transcriptional regulation. This is Transcription elongation factor A protein-like 5 (TCEAL5) from Homo sapiens (Human).